Here is a 511-residue protein sequence, read N- to C-terminus: MKREHNHRESSAGEGGSSSMTTVIKEEAAGVDELLVVLGYKVRSSDMADVAHKLEQLEMVLGDGISNLSDETVHYNPSDLSGWVESMLSDLDPTRIQEKPDSEYDLRAIPGSAVYPRDEHVTRRSKRTRIESELSSTRSVVVLDSQETGVRLVHALLACAEAVQQNNLKLADALVKHVGLLASSQAGAMRKVATYFAEGLARRIYRIYPRDDVALSSFSDTLQIHFYESCPYLKFAHFTANQAILEVFATAEKVHVIDLGLNHGLQWPALIQALALRPNGPPDFRLTGIGYSLTDIQEVGWKLGQLASTIGVNFEFKSIALNNLSDLKPEMLDIRPGLESVAVNSVFELHRLLAHPGSIDKFLSTIKSIRPDIMTVVEQEANHNGTVFLDRFTESLHYYSSLFDSLEGPPSQDRVMSELFLGRQILNLVACEGEDRVERHETLNQWRNRFGLGGFKPVSIGSNAYKQASMLLALYAGADGYNVEENEGCLLLGWQTRPLIATSAWRINRVE.

Positions Met-1–Ser-11 are enriched in basic and acidic residues. Positions Met-1–Met-20 are disordered. The short motif at Asp-32–Val-36 is the DELLA motif element. Residues Leu-54–Glu-58 carry the LEXLE motif motif. Residues Val-73–Pro-77 carry the VHYNP motif motif. In terms of domain architecture, GRAS spans Leu-143 to Arg-506. Residues Val-150–Ile-204 form a leucine repeat I (LRI) region. A LxCxE motif motif is present at residues Leu-157–Glu-161. The tract at residues Gln-223–Gly-288 is VHIID. The short motif at Val-254 to Asp-258 is the VHIID element. The leucine repeat II (LRII) stretch occupies residues Glu-298–Glu-330. The interval Val-341 to Asn-427 is PFYRE. The LXXLL motif signature appears at Leu-349–Leu-353. Residues Ala-430–Arg-506 form an SAW region.

The protein belongs to the GRAS family. DELLA subfamily. In terms of assembly, interacts directly with the GID2/SLY1 component of the SCF(GID2) complex. Interacts (via N-terminus) with GID1A, GID1B and GID1B (via N-terminus). Interacts with the BOI proteins BOI, BRG1, BRG2 and BRG3. Binds to and coactivates GAF1/IDD2 and ENY/IDD1. Post-translationally, phosphorylated. May be ubiquitinated, as suggested by its interaction with GID2. Ubiquitination is however unsure since in contrast to other DELLA proteins, it is not ubiquitinated and degraded upon GA application. Nevertheless, ubiquitination may be triggered by other processes. Predominantly expressed in germinating seeds and flowers and siliques. Highly expressed in inflorescences and weakly or not expressed in rosette leaves, etiolated seedlings, siliques, mature stems and roots. RGA and GAI transcripts were detected at slightly varying levels in all tissues examined. RGL2 signal was undetected, and RGL3 signal was very weak in all tissues examined (rosette leaves, seedlings, inflorescences, and siliques) except inflorescences. In the flower, it is expressed in developing ovules as well as in developing anthers throughout microspore development.

Its subcellular location is the nucleus. Probable transcriptional regulator that acts as a repressor of the gibberellin (GA) signaling pathway. No effect of the BOI proteins on its stability. Probably acts by participating in large multiprotein complexes that repress transcription of GA-inducible genes. Has overlapping but distinct roles in GA signaling compared to RGA and GAI. Regulates the floral development. May also participate in seed germination and in ovule and anther development. Its activity is probably regulated by other phytohormones such as auxin and ethylene. This Arabidopsis thaliana (Mouse-ear cress) protein is DELLA protein RGL1 (RGL1).